The sequence spans 494 residues: UPF0371 protein SPy_1343/M5005_Spy1095 (494 aa).

The protein belongs to the UPF0371 family.

This Streptococcus pyogenes serotype M1 protein is UPF0371 protein SPy_1343/M5005_Spy1095.